Consider the following 173-residue polypeptide: NADH-ubiquinone oxidoreductase chain 6 (173 aa).

5 helical membrane passes run 1–21 (MTYFVIFLGICFMLGVLAVAS), 27–47 (YGVVGLVVASVMGCGWLVSLG), 48–68 (VSFVSLALFLVYLGGMLVVFV), 87–107 (VVGYGLGFVLVVWMGVVLGGL), and 139–159 (CGVGLFLVAGWGLLLALFVVL).

It belongs to the complex I subunit 6 family. As to quaternary structure, core subunit of respiratory chain NADH dehydrogenase (Complex I) which is composed of 45 different subunits.

The protein resides in the mitochondrion inner membrane. It carries out the reaction a ubiquinone + NADH + 5 H(+)(in) = a ubiquinol + NAD(+) + 4 H(+)(out). Core subunit of the mitochondrial membrane respiratory chain NADH dehydrogenase (Complex I) which catalyzes electron transfer from NADH through the respiratory chain, using ubiquinone as an electron acceptor. Essential for the catalytic activity and assembly of complex I. The sequence is that of NADH-ubiquinone oxidoreductase chain 6 (MT-ND6) from Gallus gallus (Chicken).